Here is a 198-residue protein sequence, read N- to C-terminus: Recombination protein RecR (198 aa).

A C4-type zinc finger spans residues 57-72 (CSICGNLTDDDPCHIC). Residues 80–175 (ETILVVEASK…KVTRLARGLA (96 aa)) enclose the Toprim domain.

It belongs to the RecR family.

In terms of biological role, may play a role in DNA repair. It seems to be involved in an RecBC-independent recombinational process of DNA repair. It may act with RecF and RecO. This Streptococcus equi subsp. zooepidemicus (strain MGCS10565) protein is Recombination protein RecR.